Reading from the N-terminus, the 502-residue chain is Probable cytosol aminopeptidase (502 aa).

Mn(2+)-binding residues include Lys254 and Asp259. The active site involves Lys266. Positions 277, 336, and 338 each coordinate Mn(2+). The active site involves Arg340.

Belongs to the peptidase M17 family. The cofactor is Mn(2+).

It localises to the cytoplasm. The enzyme catalyses Release of an N-terminal amino acid, Xaa-|-Yaa-, in which Xaa is preferably Leu, but may be other amino acids including Pro although not Arg or Lys, and Yaa may be Pro. Amino acid amides and methyl esters are also readily hydrolyzed, but rates on arylamides are exceedingly low.. It catalyses the reaction Release of an N-terminal amino acid, preferentially leucine, but not glutamic or aspartic acids.. In terms of biological role, presumably involved in the processing and regular turnover of intracellular proteins. Catalyzes the removal of unsubstituted N-terminal amino acids from various peptides. The polypeptide is Probable cytosol aminopeptidase (Tropheryma whipplei (strain TW08/27) (Whipple's bacillus)).